A 41-amino-acid chain; its full sequence is Large ribosomal subunit protein bL36 (41 aa).

The protein belongs to the bacterial ribosomal protein bL36 family.

This is Large ribosomal subunit protein bL36 from Cereibacter sphaeroides (strain ATCC 17029 / ATH 2.4.9) (Rhodobacter sphaeroides).